The following is a 189-amino-acid chain: dCTP deaminase (189 aa).

Residues 112–117 (KSTYAR), 136–138 (TLE), glutamine 157, tyrosine 171, and glutamine 181 each bind dCTP. The Proton donor/acceptor role is filled by glutamate 138.

The protein belongs to the dCTP deaminase family. As to quaternary structure, homotrimer.

The catalysed reaction is dCTP + H2O + H(+) = dUTP + NH4(+). The protein operates within pyrimidine metabolism; dUMP biosynthesis; dUMP from dCTP (dUTP route): step 1/2. In terms of biological role, catalyzes the deamination of dCTP to dUTP. The chain is dCTP deaminase from Leptothrix cholodnii (strain ATCC 51168 / LMG 8142 / SP-6) (Leptothrix discophora (strain SP-6)).